We begin with the raw amino-acid sequence, 57 residues long: Phosphatase RapH inhibitor (57 aa).

Propeptides lie at residues 1 to 34 (MPIK…FKES) and 41 to 57 (YIDH…KALS). The disordered stretch occupies residues 26-57 (TNSGGFKESTDRNTTYIDHSPYKLSDQKKALS).

It belongs to the Phr family. Contains a predicted signal peptide cleavage site in the N-terminal region, however the propeptide is probably only subject to processing events at the ends of the mature peptide.

It localises to the secreted. The protein resides in the cytoplasm. Functionally, signaling molecule involved the regulation of both sporulation and competence. Secreted during production, but the mature peptide acts intracellularly, indicating that it needs to be imported into the cell to function. Acts by inhibiting RapH activity. Can inhibit both RapH activities, the dephosphorylation of Spo0F and the sequestration of ComA. The chain is Phosphatase RapH inhibitor (phrH) from Bacillus subtilis (strain 168).